A 478-amino-acid polypeptide reads, in one-letter code: Glucose-6-phosphate 1-dehydrogenase (478 aa).

NADP(+)-binding positions include R48, 86–87 (DF), and K142. Positions 172, 176, 210, and 229 each coordinate substrate. The active-site Proton acceptor is H234. The substrate site is built by K334 and K339.

The protein belongs to the glucose-6-phosphate dehydrogenase family.

The enzyme catalyses D-glucose 6-phosphate + NADP(+) = 6-phospho-D-glucono-1,5-lactone + NADPH + H(+). It participates in carbohydrate degradation; pentose phosphate pathway; D-ribulose 5-phosphate from D-glucose 6-phosphate (oxidative stage): step 1/3. Functionally, catalyzes the oxidation of glucose 6-phosphate to 6-phosphogluconolactone. The chain is Glucose-6-phosphate 1-dehydrogenase from Borreliella burgdorferi (strain ATCC 35210 / DSM 4680 / CIP 102532 / B31) (Borrelia burgdorferi).